The chain runs to 312 residues: UPF0725 protein At3g19520 (312 aa).

Belongs to the UPF0725 (EMB2204) family.

This chain is UPF0725 protein At3g19520, found in Arabidopsis thaliana (Mouse-ear cress).